Here is a 281-residue protein sequence, read N- to C-terminus: Pantothenate synthetase (281 aa).

30-37 contacts ATP; the sequence is MGYLHEGH. His-37 functions as the Proton donor in the catalytic mechanism. Residue Gln-61 participates in (R)-pantoate binding. A beta-alanine-binding site is contributed by Gln-61. 147-150 contributes to the ATP binding site; it reads GEKD. Gln-153 contributes to the (R)-pantoate binding site. ATP is bound by residues Ile-176 and 184–187; that span reads KSSR.

The protein belongs to the pantothenate synthetase family. As to quaternary structure, homodimer.

Its subcellular location is the cytoplasm. It catalyses the reaction (R)-pantoate + beta-alanine + ATP = (R)-pantothenate + AMP + diphosphate + H(+). Its pathway is cofactor biosynthesis; (R)-pantothenate biosynthesis; (R)-pantothenate from (R)-pantoate and beta-alanine: step 1/1. Functionally, catalyzes the condensation of pantoate with beta-alanine in an ATP-dependent reaction via a pantoyl-adenylate intermediate. The protein is Pantothenate synthetase of Clostridium botulinum (strain Langeland / NCTC 10281 / Type F).